A 199-amino-acid polypeptide reads, in one-letter code: Chaperone protein TorD (199 aa).

Belongs to the TorD/DmsD family. TorD subfamily.

It is found in the cytoplasm. In terms of biological role, involved in the biogenesis of TorA. Acts on TorA before the insertion of the molybdenum cofactor and, as a result, probably favors a conformation of the apoenzyme that is competent for acquiring the cofactor. The polypeptide is Chaperone protein TorD (Escherichia coli (strain K12 / MC4100 / BW2952)).